The primary structure comprises 308 residues: L-lactate dehydrogenase 2 (308 aa).

Residues V13, D34, R39, Y64, and 78–79 (GV) each bind NAD(+). R87 serves as a coordination point for substrate. An NAD(+)-binding site is contributed by T100. 119–122 (NPVD) serves as a coordination point for substrate. Residue T142 coordinates NAD(+). Residue 147-150 (DSMR) coordinates substrate. The active-site Proton acceptor is H174. Residue T224 coordinates substrate.

This sequence belongs to the LDH/MDH superfamily. LDH family. In terms of assembly, homotetramer.

The protein resides in the cytoplasm. The catalysed reaction is (S)-lactate + NAD(+) = pyruvate + NADH + H(+). The protein operates within fermentation; pyruvate fermentation to lactate; (S)-lactate from pyruvate: step 1/1. Catalyzes the conversion of lactate to pyruvate. The sequence is that of L-lactate dehydrogenase 2 from Lactobacillus acidophilus (strain ATCC 700396 / NCK56 / N2 / NCFM).